The primary structure comprises 145 residues: Small ribosomal subunit protein bS6 (145 aa).

The protein belongs to the bacterial ribosomal protein bS6 family.

Functionally, binds together with bS18 to 16S ribosomal RNA. This chain is Small ribosomal subunit protein bS6, found in Mycoplasmopsis agalactiae (strain NCTC 10123 / CIP 59.7 / PG2) (Mycoplasma agalactiae).